The sequence spans 1111 residues: Cellulose synthase-like protein D4 (1111 aa).

Disordered stretches follow at residues methionine 1–arginine 26 and aspartate 175–arginine 202. The span at glycine 192–arginine 202 shows a compositional bias: polar residues. Transmembrane regions (helical) follow at residues alanine 266–leucine 286 and alanine 297–leucine 317. Active-site residues include aspartate 397 and aspartate 809. 6 helical membrane-spanning segments follow: residues leucine 891–valine 911, leucine 914–valine 934, leucine 963–leucine 983, leucine 1007–isoleucine 1027, leucine 1040–glycine 1060, and threonine 1070–isoleucine 1090.

It belongs to the glycosyltransferase 2 family. Plant cellulose synthase-like D subfamily.

The protein localises to the golgi apparatus membrane. Its function is as follows. Thought to be a Golgi-localized beta-glycan synthase that polymerize the backbones of noncellulosic polysaccharides (hemicelluloses) of plant cell wall. This Arabidopsis thaliana (Mouse-ear cress) protein is Cellulose synthase-like protein D4 (CSLD4).